Here is a 294-residue protein sequence, read N- to C-terminus: Basic endochitinase (294 aa).

Positions 1-24 (MNIKVSLLFILPIFLLLLTSKVKA) are cleaved as a signal peptide. One can recognise a GH18 domain in the interval 25–294 (GDIVVYWGQD…GYSSAIRGAV (270 aa)). Disulfide bonds link cysteine 44-cysteine 91 and cysteine 74-cysteine 81. The active-site Proton donor is the glutamate 151. A disulfide bridge links cysteine 182 with cysteine 211.

It belongs to the glycosyl hydrolase 18 family. Chitinase class II subfamily.

The catalysed reaction is Random endo-hydrolysis of N-acetyl-beta-D-glucosaminide (1-&gt;4)-beta-linkages in chitin and chitodextrins.. Its function is as follows. This protein functions as a defense against chitin containing fungal pathogens. The chain is Basic endochitinase from Nicotiana tabacum (Common tobacco).